We begin with the raw amino-acid sequence, 610 residues long: Phosphoenolpyruvate carboxykinase [GTP] (610 aa).

Substrate-binding positions include Arg-82 and 221-223 (YGG). Positions 230 and 250 each coordinate Mn(2+). Ser-272 contacts substrate. Position 273–278 (273–278 (ACGKTN)) interacts with GTP. Residue Cys-274 is part of the active site. Asp-297 contacts Mn(2+). 387–389 (NSR) lines the substrate pocket. Residues Arg-389, Arg-420, and 515–518 (FGDN) contribute to the GTP site.

This sequence belongs to the phosphoenolpyruvate carboxykinase [GTP] family. Monomer. Mn(2+) serves as cofactor.

It localises to the cytoplasm. The catalysed reaction is oxaloacetate + GTP = phosphoenolpyruvate + GDP + CO2. Its pathway is carbohydrate biosynthesis; gluconeogenesis. In terms of biological role, catalyzes the conversion of oxaloacetate (OAA) to phosphoenolpyruvate (PEP), the rate-limiting step in the metabolic pathway that produces glucose from lactate and other precursors derived from the citric acid cycle. This Corynebacterium glutamicum (strain R) protein is Phosphoenolpyruvate carboxykinase [GTP].